Consider the following 277-residue polypeptide: Purine nucleoside phosphorylase 2 (277 aa).

Phosphate contacts are provided by residues H65, 85–87, and A117; that span reads RGH. E197 provides a ligand contact to a purine D-ribonucleoside. S216 contributes to the phosphate binding site. N239 contacts a purine D-ribonucleoside.

The protein belongs to the PNP/MTAP phosphorylase family. As to quaternary structure, hexamer. Dimer of trimers.

The catalysed reaction is a purine D-ribonucleoside + phosphate = a purine nucleobase + alpha-D-ribose 1-phosphate. It participates in purine metabolism; xanthosine degradation. The protein operates within purine metabolism; purine nucleoside salvage. Its activity is regulated as follows. Rapidly inactivated by p-chloromercuriphenylsulfonic acid (p-CMB). Dithiothreitol incubation restores the activity. The purine nucleoside phosphorylases catalyze the phosphorolytic breakdown of the N-glycosidic bond in the beta-(deoxy)ribonucleoside molecules, with the formation of the corresponding free purine bases and pentose-1-phosphate. This protein can degrade all purine nucleosides including xanthosine, inosine and guanosine, but cannot cleave adenosine, deoxyadenosine or hypoxanthine arabinoside. Has a preference for the neutral over the monoanionic form of xanthosine. This Escherichia coli (strain K12) protein is Purine nucleoside phosphorylase 2 (xapA).